The following is a 78-amino-acid chain: Large ribosomal subunit protein eL38 (78 aa).

It belongs to the eukaryotic ribosomal protein eL38 family. As to quaternary structure, component of the large ribosomal subunit. Mature ribosomes consist of a small (40S) and a large (60S) subunit. The 40S subunit contains about 32 different proteins and 1 molecule of RNA (18S). The 60S subunit contains 45 different proteins and 3 molecules of RNA (25S, 5.8S and 5S).

The protein resides in the cytoplasm. Functionally, component of the ribosome, a large ribonucleoprotein complex responsible for the synthesis of proteins in the cell. The small ribosomal subunit (SSU) binds messenger RNAs (mRNAs) and translates the encoded message by selecting cognate aminoacyl-transfer RNA (tRNA) molecules. The large subunit (LSU) contains the ribosomal catalytic site termed the peptidyl transferase center (PTC), which catalyzes the formation of peptide bonds, thereby polymerizing the amino acids delivered by tRNAs into a polypeptide chain. The nascent polypeptides leave the ribosome through a tunnel in the LSU and interact with protein factors that function in enzymatic processing, targeting, and the membrane insertion of nascent chains at the exit of the ribosomal tunnel. The sequence is that of Large ribosomal subunit protein eL38 from Candida albicans (strain SC5314 / ATCC MYA-2876) (Yeast).